The primary structure comprises 215 residues: uncharacterized protein (215 aa).

This is an uncharacterized protein from Acanthamoeba polyphaga (Amoeba).